A 606-amino-acid chain; its full sequence is Cryptochrome-1 (606 aa).

One can recognise a Photolyase/cryptochrome alpha/beta domain in the interval 3–132 (VNAVHWFRKG…EVIVRISHTL (130 aa)). Lysine 11 participates in a covalent cross-link: Glycyl lysine isopeptide (Lys-Gly) (interchain with G-Cter in ubiquitin). Positions 50-54 (NRWRF) match the LIR 1 motif. Serine 71 carries the post-translational modification Phosphoserine; by AMPK. The short motif at 82-87 (DVFPRL) is the LIR 2 element. Residue lysine 107 forms a Glycyl lysine isopeptide (Lys-Gly) (interchain with G-Cter in ubiquitin) linkage. The LIR 3 signature appears at 151-156 (KRFQTL). Lysine 159 is covalently cross-linked (Glycyl lysine isopeptide (Lys-Gly) (interchain with G-Cter in ubiquitin)). Phosphoserine; by MAPK is present on serine 247. Serine 252 is a binding site for FAD. 2 short sequence motifs (LIR) span residues 255–260 (LRFGCL) and 271–276 (DLYKKV). Serine 280 carries the phosphoserine; by AMPK modification. The short motif at 285 to 290 (SLYGQL) is the LIR 6 element. Glutamine 289 lines the FAD pocket. Lysine 329 participates in a covalent cross-link: Glycyl lysine isopeptide (Lys-Gly) (interchain with G-Cter in ubiquitin). The short motif at 335 to 339 (TGFPW) is the LIR 7 element. Histidine 355 contributes to the FAD binding site. The interval 371–470 (WISWEEGMKV…LIGVNYPKPM (100 aa)) is required for inhibition of CLOCK-BMAL1-mediated transcription. The short motif at 379–384 (KVFEEL) is the LIR 8 element. 387-389 (DAD) lines the FAD pocket. Short sequence motifs (LIR) lie at residues 395–400 (GSWMWL), 411–416 (HCYCPV), and 430–435 (RRYLPV). Positions 471-493 (VNHAEASRLNIERMKQIYQQLSR) are interaction with TIMELESS. Lysine 485 is covalently cross-linked (Glycyl lysine isopeptide (Lys-Gly) (interchain with G-Cter in ubiquitin)). 2 short sequence motifs (LIR) span residues 486 to 491 (QIYQQL) and 492 to 497 (SRYRGL). The segment at 559–606 (YAHGDSQQTHSLKQGRSSAGTGLSSGKRPSQEEDAQSVGPKVQRQSSN) is disordered. The span at 563-586 (DSQQTHSLKQGRSSAGTGLSSGKR) shows a compositional bias: polar residues. A Glycyl lysine isopeptide (Lys-Gly) (interchain with G-Cter in ubiquitin) cross-link involves residue lysine 585. A Phosphoserine modification is found at serine 588.

It belongs to the DNA photolyase class-1 family. Component of the circadian core oscillator, which includes the CRY proteins, CLOCK or NPAS2, BMAL1 or BMAL2, CSNK1D and/or CSNK1E, TIMELESS, and the PER proteins. Interacts directly with TIMELESS. Interacts directly with PER1 and PER2; interaction with PER2 inhibits its ubiquitination and vice versa. Interacts with PER3. Interacts with FBXL21. Interacts with FBXL3. Interacts with PPP5C (via TPR repeats). Interacts with CLOCK-BMAL1 independently of PER2 and DNA. Interacts with HDAC1, HDAC2 and SIN3B. Interacts with nuclear receptors AR, NR1D1, NR3C1/GR, RORA and RORC; the interaction with at least NR3C1/GR is ligand dependent. Interacts with PRKDC. Interacts with the G protein subunit alpha GNAS; the interaction may block GPCR-mediated regulation of cAMP concentrations. Interacts with PRMT5. Interacts with EZH2. Interacts with MYBBP1A, DOCK7, HNRNPU, RPL7A, RPL8 and RPS3. Interacts with MAP1LC3B. Interacts with CLOCK. Interacts with BMAL1. Interacts weakly with HDAC3; this interaction is enhanced in the presence of FBXL3. Interacts with TRIM28, KCTD5 and DDB1. Interacts with DTL. Interacts with DDB1-CUL4A complex. Interacts with FOXO1. Interacts with PSMD2 in a KDM8-dependent manner. Interacts with KDM8 in a FBXL3-dependent manner. Interacts with PPARA. Interacts with PPARG in a ligand-dependent manner. Interacts with PPARD (via domain NR LBD) in a ligand-dependent manner. Interacts with NR1I2 (via domain NR LBD) in a ligand-dependent manner. Interacts with NR1I3, VDR and HNF4A. It depends on FAD as a cofactor. (6R)-5,10-methylene-5,6,7,8-tetrahydrofolate is required as a cofactor. Post-translationally, phosphorylation on Ser-247 by MAPK is important for the inhibition of CLOCK-BMAL1-mediated transcriptional activity. Phosphorylation by CSNK1E requires interaction with PER1 or PER2. Phosphorylation at Ser-71 and Ser-280 by AMPK decreases protein stability. Phosphorylation at Ser-588 exhibits a robust circadian rhythm with a peak at CT8, increases protein stability, prevents SCF(FBXL3)-mediated degradation and is antagonized by interaction with PRKDC. Ubiquitinated by the SCF(FBXL3) and SCF(FBXL21) complexes, regulating the balance between degradation and stabilization. The SCF(FBXL3) complex is mainly nuclear and mediates ubiquitination and subsequent degradation of CRY1. In contrast, cytoplasmic SCF(FBXL21) complex-mediated ubiquitination leads to stabilize CRY1 and counteract the activity of the SCF(FBXL3) complex. The SCF(FBXL3) and SCF(FBXL21) complexes probably mediate ubiquitination at different Lys residues. Ubiquitination at Lys-11 and Lys-107 are specifically ubiquitinated by the SCF(FBXL21) complex but not by the SCF(FBXL3) complex. Ubiquitination may be inhibited by PER2. Deubiquitinated by USP7. In terms of processing, undergoes autophagy-mediated degradation in the liver in a time-dependent manner. Autophagic degradation of CRY1 (an inhibitor of gluconeogenesis) occurs during periods of reduced feeding allowing induction of gluconeogenesis and maintenance of blood glucose levels. As to expression, expressed in cones, amacrine cells, and retinal ganglion cells of the retina (at protein level). Expressed in all tissues examined including heart, brain, spleen, lung, liver, skeletal muscle, kidney and testis. Higher levels in brain, liver and testis. In the retina, highly expressed in the ganglion cell layer (GCL) and in the inner nuclear layer (INL). Evenly distributed in central and peripheral retina. In the brain, highly expressed in the suprachiasmatic nucleus (SCN). High levels in cerebral cortical layers particularly in the pyramidial cell layer of the hippocampus, the granular cell layer of the dentate gyrus (DG) and the pyramidal cell layer of the piriform cortex (PFC).

Its subcellular location is the cytoplasm. The protein resides in the nucleus. With respect to regulation, KL001 (N-[3-(9H-carbazol-9-yl)-2-hydroxypropyl]-N-(2-furanylmethyl)-methanesulfonamide) binds to CRY1 and stabilizes it by inhibiting FBXL3- and ubiquitin-dependent degradation of CRY1 resulting in lengthening of the circadian periods. KL001-mediated CRY1 stabilization can inhibit glucagon-induced gluconeogenesis in primary hepatocytes. Its function is as follows. Transcriptional repressor which forms a core component of the circadian clock. The circadian clock, an internal time-keeping system, regulates various physiological processes through the generation of approximately 24 hour circadian rhythms in gene expression, which are translated into rhythms in metabolism and behavior. It is derived from the Latin roots 'circa' (about) and 'diem' (day) and acts as an important regulator of a wide array of physiological functions including metabolism, sleep, body temperature, blood pressure, endocrine, immune, cardiovascular, and renal function. Consists of two major components: the central clock, residing in the suprachiasmatic nucleus (SCN) of the brain, and the peripheral clocks that are present in nearly every tissue and organ system. Both the central and peripheral clocks can be reset by environmental cues, also known as Zeitgebers (German for 'timegivers'). The predominant Zeitgeber for the central clock is light, which is sensed by retina and signals directly to the SCN. The central clock entrains the peripheral clocks through neuronal and hormonal signals, body temperature and feeding-related cues, aligning all clocks with the external light/dark cycle. Circadian rhythms allow an organism to achieve temporal homeostasis with its environment at the molecular level by regulating gene expression to create a peak of protein expression once every 24 hours to control when a particular physiological process is most active with respect to the solar day. Transcription and translation of core clock components (CLOCK, NPAS2, BMAL1, BMAL2, PER1, PER2, PER3, CRY1 and CRY2) plays a critical role in rhythm generation, whereas delays imposed by post-translational modifications (PTMs) are important for determining the period (tau) of the rhythms (tau refers to the period of a rhythm and is the length, in time, of one complete cycle). A diurnal rhythm is synchronized with the day/night cycle, while the ultradian and infradian rhythms have a period shorter and longer than 24 hours, respectively. Disruptions in the circadian rhythms contribute to the pathology of cardiovascular diseases, cancer, metabolic syndromes and aging. A transcription/translation feedback loop (TTFL) forms the core of the molecular circadian clock mechanism. Transcription factors, CLOCK or NPAS2 and BMAL1 or BMAL2, form the positive limb of the feedback loop, act in the form of a heterodimer and activate the transcription of core clock genes and clock-controlled genes (involved in key metabolic processes), harboring E-box elements (5'-CACGTG-3') within their promoters. The core clock genes: PER1/2/3 and CRY1/2 which are transcriptional repressors form the negative limb of the feedback loop and interact with the CLOCK|NPAS2-BMAL1|BMAL2 heterodimer inhibiting its activity and thereby negatively regulating their own expression. This heterodimer also activates nuclear receptors NR1D1/2 and RORA/B/G, which form a second feedback loop and which activate and repress BMAL1 transcription, respectively. CRY1 and CRY2 have redundant functions but also differential and selective contributions at least in defining the pace of the SCN circadian clock and its circadian transcriptional outputs. More potent transcriptional repressor in cerebellum and liver than CRY2, though more effective in lengthening the period of the SCN oscillator. On its side, CRY2 seems to play a critical role in tuning SCN circadian period by opposing the action of CRY1. With CRY2, is dispensable for circadian rhythm generation but necessary for the development of intercellular networks for rhythm synchrony. Capable of translocating circadian clock core proteins such as PER proteins to the nucleus. Interacts with CLOCK-BMAL1 independently of PER proteins and is found at CLOCK-BMAL1-bound sites, suggesting that CRY may act as a molecular gatekeeper to maintain CLOCK-BMAL1 in a poised and repressed state until the proper time for transcriptional activation. Represses the CLOCK-BMAL1 induced transcription of BHLHE40/DEC1, ATF4, MTA1, KLF10 and NAMPT. May repress circadian target genes expression in collaboration with HDAC1 and HDAC2 through histone deacetylation. Mediates the clock-control activation of ATR and modulates ATR-mediated DNA damage checkpoint. In liver, mediates circadian regulation of cAMP signaling and gluconeogenesis by binding to membrane-coupled G proteins and blocking glucagon-mediated increases in intracellular cAMP concentrations and CREB1 phosphorylation. Inhibits hepatic gluconeogenesis by decreasing nuclear FOXO1 levels that down-regulates gluconeogenic gene expression. Besides its role in the maintenance of the circadian clock, is also involved in the regulation of other processes. Represses glucocorticoid receptor NR3C1/GR-induced transcriptional activity by binding to glucocorticoid response elements (GREs). Plays a key role in glucose and lipid metabolism modulation, in part, through the transcriptional regulation of genes involved in these pathways, such as LEP or ACSL4. Represses PPARD and its target genes in the skeletal muscle and limits exercise capacity. Plays an essential role in the generation of circadian rhythms in the retina. Represses the transcriptional activity of NR1I2. This chain is Cryptochrome-1 (Cry1), found in Mus musculus (Mouse).